Consider the following 310-residue polypeptide: Protein OS-9 homolog (310 aa).

The first 40 residues, 1–40 (MFSSSMFPHLILPAIGSSKVRTMVLPFAFVGFFIFPICLA), serve as a signal peptide directing secretion. N-linked (GlcNAc...) asparagine glycosylation is found at Asn-60, Asn-97, and Asn-104. An MRH domain is found at 129 to 255 (NVFLIENRGY…TIHVPGLCSL (127 aa)). The a mannooligosaccharide derivative site is built by Trp-139 and Gln-151. Asn-204 is a glycosylation site (N-linked (GlcNAc...) asparagine). 2 disulfide bridges follow: Cys-208–Cys-241 and Cys-223–Cys-253. The a mannooligosaccharide derivative site is built by Asp-209, Arg-215, Glu-237, and Tyr-243. Basic and acidic residues-rich tracts occupy residues 282–292 (VDHKDSQHVVD) and 301–310 (EVKEVETQSS). Residues 282-310 (VDHKDSQHVVDEVAQTSPPEVKEVETQSS) are disordered.

It belongs to the OS-9 family. As to quaternary structure, interacts with missfolded ER lumenal proteins.

Its subcellular location is the endoplasmic reticulum membrane. Its function is as follows. Lectin involved in the quality control of the secretory pathway. As a member of the endoplasmic reticulum-associated degradation lumenal (ERAD-L) surveillance system, targets misfolded endoplasmic reticulum lumenal glycoproteins for degradation. The sequence is that of Protein OS-9 homolog (yos9) from Schizosaccharomyces pombe (strain 972 / ATCC 24843) (Fission yeast).